Consider the following 715-residue polypeptide: MTEVASSVVYEVLGRRAQDVDEPIMDYIINVLADEDFDFGEEGEGAFDAVGELLVAAECVSDFEECRLVCSKLSDKFGKHGLVKPTPTVRSLAMPVRMNDGMDDGPVKKKKPEPVDGPLLTERDLAKIERRKKKDDRQRELQYQQHVAEMEAAKAGMPTVSVNHDTGGGSAIRDIHMDNFNVSVGGRDLIVDGSITLSFGRHYGLVGRNGTGKTTFLRYMAMHAIEGIPTNCQILHVEQEVVGDKTTALQCVLNTDIERTKLLEEEIQILAKQRETEEPTAKDGMPTKDTVEGDLMSQRLEEIYKRLDAIDAYTAEARAASILAGLSFTPEMQLKATNTFSGGWRMRIALARALFIEPDLLLLDEPTNHLDLHAVLWLETYLTKWPKTFIVVSHAREFLNTVVTDIIHLQNQKLSTYKGNYDIFERTREEQVKNQQKAFESSERSRSHMQAFIDKFRYNAKRASLVQSRIKALDRLAHVDQVINDPDYKFEFPTPDDKPGPPIISFSDASFGYPGGPLLFRNLNFGIDLDSRIAMVGPNGIGKSTILKLISGDLQPSSGTVFRSAKVRVAVFSQHHVDGLDLSSNPLLYMMRCYPGVPEQKLRSHLGSLGVTGNLALQPMYTLSGGQKSRVAFAKITFKKPHLLLLDEPSNHLDLDAVEALIQGLVLFQGGICMVSHDEHLISGSVDELWVVSDGRIAPFHGTFHDYKKLLQSST.

Thr2 carries the N-acetylthreonine modification. The segment at 96 to 118 (VRMNDGMDDGPVKKKKPEPVDGP) is disordered. 2 ABC transporter domains span residues 175 to 436 (IHMD…KNQQ) and 504 to 713 (ISFS…LLQS). ATP contacts are provided by residues 207–214 (GRNGTGKT) and 537–544 (GPNGIGKS).

Belongs to the ABC transporter superfamily. ABCF family. EF3 (TC 3.A.1.121) subfamily.

The protein is ABC transporter F family member 3 (ABCF3) of Arabidopsis thaliana (Mouse-ear cress).